The primary structure comprises 561 residues: uncharacterized protein (561 aa).

A signal peptide spans 1-24 (MELGAWRSILYIAFLFAITRHAFC). Residues 25 to 509 (KAVNLVHSPE…GYVYLSEIKQ (485 aa)) are Lumenal-facing. The helical transmembrane segment at 510–530 (YSSLILISLWISLILFVSFLN) threads the bilayer. Over 531-561 (RRLILHYSFESVHQLKTLTRKFIYSSLLKQD) the chain is Cytoplasmic.

Its subcellular location is the endoplasmic reticulum membrane. The protein resides in the golgi apparatus membrane. This is an uncharacterized protein from Schizosaccharomyces pombe (strain 972 / ATCC 24843) (Fission yeast).